Here is a 325-residue protein sequence, read N- to C-terminus: Leucine-rich repeat protein FLOR 1 (325 aa).

10 LRR repeats span residues 65-88 (NRRV…QIGD), 89-114 (LVDL…ITKL), 115-140 (KNLN…ELKS), 142-162 (TFLD…LSQM), 163-185 (PKLE…SFGS), 187-211 (VGNV…LSKY), 213-233 (FNAV…FFGR), 234-256 (NKTT…KVKF), 257-280 (ARSI…ALTK), and 281-305 (LHLE…LLQT).

It belongs to the polygalacturonase-inhibiting protein family. Interacts with MADS domain transcription factors during flower development. Component of a complex made of FLOR1, VSP1 and AGAMOUS (AG). Binds directly with AG. In terms of tissue distribution, confined to flowers and inflorescences (e.g. inflorescence meristems, floral meristems, stamens and carpels).

The protein resides in the cytoplasm. It localises to the nucleus. The protein localises to the perinuclear region. Its subcellular location is the cell membrane. Functionally, promotes flowering transition in long days (LD). In Arabidopsis thaliana (Mouse-ear cress), this protein is Leucine-rich repeat protein FLOR 1.